The primary structure comprises 446 residues: Argininosuccinate synthase (446 aa).

ATP-binding positions include 17-25 (AFSGGLDTS) and alanine 43. Tyrosine 99 contacts L-citrulline. Residues glycine 129 and threonine 131 each contribute to the ATP site. 3 residues coordinate L-aspartate: threonine 131, asparagine 135, and aspartate 136. Asparagine 135 contacts L-citrulline. Aspartate 136 contacts ATP. The L-citrulline site is built by arginine 139 and serine 192. Aspartate 194 contributes to the ATP binding site. L-citrulline contacts are provided by threonine 201, glutamate 203, and glutamate 280.

It belongs to the argininosuccinate synthase family. Type 2 subfamily. In terms of assembly, homotetramer.

Its subcellular location is the cytoplasm. The enzyme catalyses L-citrulline + L-aspartate + ATP = 2-(N(omega)-L-arginino)succinate + AMP + diphosphate + H(+). It functions in the pathway amino-acid biosynthesis; L-arginine biosynthesis; L-arginine from L-ornithine and carbamoyl phosphate: step 2/3. In Burkholderia thailandensis (strain ATCC 700388 / DSM 13276 / CCUG 48851 / CIP 106301 / E264), this protein is Argininosuccinate synthase.